Reading from the N-terminus, the 697-residue chain is Polyribonucleotide nucleotidyltransferase (697 aa).

Asp-484 and Asp-490 together coordinate Mg(2+). Residues 551–610 (PRITTIWVKTDKIRDVIGSGGKNIRGITEATGVSIDIEDSGRINIASTSKEACDKAIKMI) enclose the KH domain. The S1 motif domain occupies 620–688 (GKLYMGTVKK…KQGKIKLSRK (69 aa)).

Belongs to the polyribonucleotide nucleotidyltransferase family. The cofactor is Mg(2+).

Its subcellular location is the cytoplasm. The enzyme catalyses RNA(n+1) + phosphate = RNA(n) + a ribonucleoside 5'-diphosphate. Functionally, involved in mRNA degradation. Catalyzes the phosphorolysis of single-stranded polyribonucleotides processively in the 3'- to 5'-direction. This is Polyribonucleotide nucleotidyltransferase from Geobacter sulfurreducens (strain ATCC 51573 / DSM 12127 / PCA).